A 464-amino-acid polypeptide reads, in one-letter code: Soluble pyridine nucleotide transhydrogenase (464 aa).

35 to 44 (DSRRVVGGNC) is a binding site for FAD.

The protein belongs to the class-I pyridine nucleotide-disulfide oxidoreductase family. Requires FAD as cofactor.

It is found in the cytoplasm. The catalysed reaction is NAD(+) + NADPH = NADH + NADP(+). In terms of biological role, conversion of NADPH, generated by peripheral catabolic pathways, to NADH, which can enter the respiratory chain for energy generation. This is Soluble pyridine nucleotide transhydrogenase from Pseudomonas aeruginosa (strain LESB58).